We begin with the raw amino-acid sequence, 245 residues long: Probable phosphatase KPN78578_10290 (245 aa).

Zn(2+) contacts are provided by His7, His9, His15, His40, Glu73, His101, His131, Asp192, and His194.

Belongs to the PHP family. As to quaternary structure, homotrimer. The cofactor is Zn(2+).

The chain is Probable phosphatase KPN78578_10290 from Klebsiella pneumoniae subsp. pneumoniae (strain ATCC 700721 / MGH 78578).